Consider the following 80-residue polypeptide: MALDTLAGLAICVGLVMGVTVIASCALLVFYYCDEREDGRPSKLLQRSIRRWRHGLSTESLTAILPDGSSTEQEIYHTRL.

The helical transmembrane segment at 10–30 threads the bilayer; that stretch reads AICVGLVMGVTVIASCALLVF.

It localises to the host membrane. The sequence is that of Protein UL148B (UL148B) from Homo sapiens (Human).